Reading from the N-terminus, the 345-residue chain is Protease HtpX homolog (345 aa).

The next 2 helical transmembrane spans lie at 6-26 (TAMLLAFMTALFMGVGYLVGG) and 27-47 (SNGMVIALLMAGGLNFFSYWN). Residue His-130 participates in Zn(2+) binding. Residue Glu-131 is part of the active site. Residue His-134 participates in Zn(2+) binding. The next 2 helical transmembrane spans lie at 145 to 165 (LTATIAGAISMLGNFAFFMGG) and 179 to 199 (IGGLLALFVAPFAAMLVQMAI). Residue Glu-204 participates in Zn(2+) binding.

The protein belongs to the peptidase M48B family. Zn(2+) serves as cofactor.

The protein localises to the cell inner membrane. The chain is Protease HtpX homolog from Bartonella henselae (strain ATCC 49882 / DSM 28221 / CCUG 30454 / Houston 1) (Rochalimaea henselae).